Here is a 540-residue protein sequence, read N- to C-terminus: Glucose-6-phosphate isomerase (540 aa).

Residue E351 is the Proton donor of the active site. Catalysis depends on residues H382 and K506.

It belongs to the GPI family.

The protein localises to the cytoplasm. It carries out the reaction alpha-D-glucose 6-phosphate = beta-D-fructose 6-phosphate. It functions in the pathway carbohydrate biosynthesis; gluconeogenesis. It participates in carbohydrate degradation; glycolysis; D-glyceraldehyde 3-phosphate and glycerone phosphate from D-glucose: step 2/4. Functionally, catalyzes the reversible isomerization of glucose-6-phosphate to fructose-6-phosphate. This Corynebacterium glutamicum (strain ATCC 13032 / DSM 20300 / JCM 1318 / BCRC 11384 / CCUG 27702 / LMG 3730 / NBRC 12168 / NCIMB 10025 / NRRL B-2784 / 534) protein is Glucose-6-phosphate isomerase.